Consider the following 101-residue polypeptide: Small ribosomal subunit protein bS18c (101 aa).

The disordered stretch occupies residues 82-101 (KQFERAESTPRTPGPRTRNK).

Belongs to the bacterial ribosomal protein bS18 family. In terms of assembly, part of the 30S ribosomal subunit.

The protein localises to the plastid. Its subcellular location is the chloroplast. The chain is Small ribosomal subunit protein bS18c from Platanus occidentalis (Sycamore).